A 207-amino-acid chain; its full sequence is Ribosomal RNA large subunit methyltransferase E (207 aa).

S-adenosyl-L-methionine contacts are provided by Gly60, Trp62, Asp80, Asp96, and Asp121. Lys161 functions as the Proton acceptor in the catalytic mechanism.

It belongs to the class I-like SAM-binding methyltransferase superfamily. RNA methyltransferase RlmE family.

It is found in the cytoplasm. The enzyme catalyses uridine(2552) in 23S rRNA + S-adenosyl-L-methionine = 2'-O-methyluridine(2552) in 23S rRNA + S-adenosyl-L-homocysteine + H(+). In terms of biological role, specifically methylates the uridine in position 2552 of 23S rRNA at the 2'-O position of the ribose in the fully assembled 50S ribosomal subunit. The chain is Ribosomal RNA large subunit methyltransferase E from Marinobacter nauticus (strain ATCC 700491 / DSM 11845 / VT8) (Marinobacter aquaeolei).